We begin with the raw amino-acid sequence, 212 residues long: Thiamine-phosphate synthase (212 aa).

4-amino-2-methyl-5-(diphosphooxymethyl)pyrimidine-binding positions include 39–41 and asparagine 71; that span reads QLR. Residues aspartate 72 and aspartate 91 each coordinate Mg(2+). Serine 110 lines the 4-amino-2-methyl-5-(diphosphooxymethyl)pyrimidine pocket. Position 136–138 (136–138) interacts with 2-[(2R,5Z)-2-carboxy-4-methylthiazol-5(2H)-ylidene]ethyl phosphate; the sequence is TGT. Lysine 139 contacts 4-amino-2-methyl-5-(diphosphooxymethyl)pyrimidine. 2-[(2R,5Z)-2-carboxy-4-methylthiazol-5(2H)-ylidene]ethyl phosphate is bound by residues glycine 167 and 187 to 188; that span reads VS.

This sequence belongs to the thiamine-phosphate synthase family. Requires Mg(2+) as cofactor.

It carries out the reaction 2-[(2R,5Z)-2-carboxy-4-methylthiazol-5(2H)-ylidene]ethyl phosphate + 4-amino-2-methyl-5-(diphosphooxymethyl)pyrimidine + 2 H(+) = thiamine phosphate + CO2 + diphosphate. It catalyses the reaction 2-(2-carboxy-4-methylthiazol-5-yl)ethyl phosphate + 4-amino-2-methyl-5-(diphosphooxymethyl)pyrimidine + 2 H(+) = thiamine phosphate + CO2 + diphosphate. The catalysed reaction is 4-methyl-5-(2-phosphooxyethyl)-thiazole + 4-amino-2-methyl-5-(diphosphooxymethyl)pyrimidine + H(+) = thiamine phosphate + diphosphate. It participates in cofactor biosynthesis; thiamine diphosphate biosynthesis; thiamine phosphate from 4-amino-2-methyl-5-diphosphomethylpyrimidine and 4-methyl-5-(2-phosphoethyl)-thiazole: step 1/1. Its function is as follows. Condenses 4-methyl-5-(beta-hydroxyethyl)thiazole monophosphate (THZ-P) and 2-methyl-4-amino-5-hydroxymethyl pyrimidine pyrophosphate (HMP-PP) to form thiamine monophosphate (TMP). This is Thiamine-phosphate synthase from Azorhizobium caulinodans (strain ATCC 43989 / DSM 5975 / JCM 20966 / LMG 6465 / NBRC 14845 / NCIMB 13405 / ORS 571).